The primary structure comprises 127 residues: MNINYFVRIVPVAVVLLVGISGASMAMSLKLPNPAELSGQWRLSLQGKADDACELQLNTEAPQLTGDVACAAKWLHEPPAGWFPTPDGLALTDNQGNRLIHLNRMDEQTYEARLPGGELLILGRFAD.

The signal sequence occupies residues 1–26 (MNINYFVRIVPVAVVLLVGISGASMA). An intrachain disulfide couples Cys53 to Cys70.

Belongs to the protease inhibitor I38 family.

It localises to the periplasm. Its function is as follows. Inhibitor of the alkaline protease. The chain is Alkaline proteinase inhibitor (inh) from Pseudomonas syringae pv. tomato (strain ATCC BAA-871 / DC3000).